Here is a 131-residue protein sequence, read N- to C-terminus: Small ribosomal subunit protein uS11 (131 aa).

The protein belongs to the universal ribosomal protein uS11 family. As to quaternary structure, part of the 30S ribosomal subunit. Interacts with proteins S7 and S18. Binds to IF-3.

Its function is as follows. Located on the platform of the 30S subunit, it bridges several disparate RNA helices of the 16S rRNA. Forms part of the Shine-Dalgarno cleft in the 70S ribosome. This chain is Small ribosomal subunit protein uS11, found in Deinococcus radiodurans (strain ATCC 13939 / DSM 20539 / JCM 16871 / CCUG 27074 / LMG 4051 / NBRC 15346 / NCIMB 9279 / VKM B-1422 / R1).